Reading from the N-terminus, the 284-residue chain is Fructosamine kinase FrlD (284 aa).

It belongs to the carbohydrate kinase PfkB family.

Its function is as follows. Catalyzes the phosphorylation of a range of fructosamines to fructosamine 6-phosphates. The sequence is that of Fructosamine kinase FrlD (frlD) from Bacillus subtilis (strain 168).